We begin with the raw amino-acid sequence, 208 residues long: Small ribosomal subunit protein uS4 (208 aa).

An S4 RNA-binding domain is found at 98–164 (TRLDNVVYRL…PKVKSIREIA (67 aa)).

Belongs to the universal ribosomal protein uS4 family. In terms of assembly, part of the 30S ribosomal subunit. Contacts protein S5. The interaction surface between S4 and S5 is involved in control of translational fidelity.

In terms of biological role, one of the primary rRNA binding proteins, it binds directly to 16S rRNA where it nucleates assembly of the body of the 30S subunit. Functionally, with S5 and S12 plays an important role in translational accuracy. This Ruminiclostridium cellulolyticum (strain ATCC 35319 / DSM 5812 / JCM 6584 / H10) (Clostridium cellulolyticum) protein is Small ribosomal subunit protein uS4.